The following is a 409-amino-acid chain: NADH-quinone oxidoreductase subunit D 1 (409 aa).

Belongs to the complex I 49 kDa subunit family. NDH-1 is composed of 14 different subunits. Subunits NuoB, C, D, E, F, and G constitute the peripheral sector of the complex.

Its subcellular location is the cell inner membrane. The catalysed reaction is a quinone + NADH + 5 H(+)(in) = a quinol + NAD(+) + 4 H(+)(out). Its function is as follows. NDH-1 shuttles electrons from NADH, via FMN and iron-sulfur (Fe-S) centers, to quinones in the respiratory chain. The immediate electron acceptor for the enzyme in this species is believed to be ubiquinone. Couples the redox reaction to proton translocation (for every two electrons transferred, four hydrogen ions are translocated across the cytoplasmic membrane), and thus conserves the redox energy in a proton gradient. This Solibacter usitatus (strain Ellin6076) protein is NADH-quinone oxidoreductase subunit D 1.